Reading from the N-terminus, the 468-residue chain is Putative FBD-associated F-box protein At5g22720 (468 aa).

The 47-residue stretch at 22–68 (EDLISQLPDSLITQILFYLQTKKAVTTSVLSKRWRSLWLSTPGLVLI) folds into the F-box domain. The 59-residue stretch at 375-433 (ELRLSFVPRCLLSSLEFVEIKGCSRSNMERVKYVGEPIETKLARYFVENSTILKKLVLP) folds into the FBD domain.

The sequence is that of Putative FBD-associated F-box protein At5g22720 from Arabidopsis thaliana (Mouse-ear cress).